The chain runs to 348 residues: Heptaprenyl diphosphate synthase component 2 (348 aa).

Isopentenyl diphosphate is bound by residues Lys-73, Arg-76, and His-105. Mg(2+)-binding residues include Asp-112 and Asp-116. Arg-121 is a binding site for all-trans-hexaprenyl diphosphate. Residue Arg-122 coordinates isopentenyl diphosphate. All-trans-hexaprenyl diphosphate contacts are provided by Lys-198, Thr-199, and Gln-236.

Belongs to the FPP/GGPP synthase family. In terms of assembly, heterodimer of component I and II. Mg(2+) is required as a cofactor.

The enzyme catalyses 4 isopentenyl diphosphate + (2E,6E)-farnesyl diphosphate = all-trans-heptaprenyl diphosphate + 4 diphosphate. In terms of biological role, supplies heptaprenyl diphosphate, the precursor for the side chain of the isoprenoid quinone menaquinone-7 (MQ-7). In Bacillus subtilis (strain 168), this protein is Heptaprenyl diphosphate synthase component 2 (hepT).